The chain runs to 79 residues: MKNKAVLMLMALFLVAVTQVHGDPEPSYKARSCTAYGYFCMIPPRCRGTVVANHWCRARGHICCSSPSNVYGKNQLLAA.

Residues 1–22 (MKNKAVLMLMALFLVAVTQVHG) form the signal peptide. The propeptide occupies 23–26 (DPEP). Disulfide bonds link Cys33–Cys63, Cys40–Cys56, and Cys46–Cys64. Residues 75 to 79 (QLLAA) constitute a propeptide that is removed on maturation.

Monomer. Post-translationally, contains 3 disulfide bonds. As to expression, expressed in hemocytes (at protein level).

In terms of biological role, involved in the melanization cascade in response to lipopolysaccharide (LPS). In vitro, reversibly and competitively inhibits trypsin (Ki=8.6 nM) but not serine proteases chymotrypsin, elastase, subtilisin, thrombin and plasmin, cysteine peptidase papain or metallopeptidase carboxypeptidase A. In Panulirus argus (Caribbean spiny lobster), this protein is Panulirin.